The following is a 332-amino-acid chain: Probable farnesyl diphosphate synthase (332 aa).

Isopentenyl diphosphate contacts are provided by K75, R78, and H107. Mg(2+) contacts are provided by D114 and D120. R125 serves as a coordination point for (2E)-geranyl diphosphate. Residue R126 coordinates isopentenyl diphosphate. K208, Q250, and K267 together coordinate (2E)-geranyl diphosphate.

This sequence belongs to the FPP/GGPP synthase family. Mg(2+) serves as cofactor.

Its subcellular location is the cytoplasm. It catalyses the reaction isopentenyl diphosphate + (2E)-geranyl diphosphate = (2E,6E)-farnesyl diphosphate + diphosphate. This Sinorhizobium fredii (strain NBRC 101917 / NGR234) protein is Probable farnesyl diphosphate synthase.